A 436-amino-acid polypeptide reads, in one-letter code: uncharacterized protein (436 aa).

Residues 1–20 (MKCAVAILLVCLTLQQAAYG) form the signal peptide. Coiled-coil stretches lie at residues 25 to 87 (EEVK…ALRN), 154 to 207 (MRKT…NSVE), and 247 to 329 (ESWG…ASLL). A compositionally biased stretch (acidic residues) spans 371–390 (EEEIAPSTEEDGSEELEADS). Residues 371-419 (EEEIAPSTEEDGSEELEADSYDSKVGGESPISQRTEERQGAEERSRLRR) are disordered. Basic and acidic residues predominate over residues 404–415 (RTEERQGAEERS).

In terms of tissue distribution, component of the acid-insoluble organic matrix of the aragonitic skeleton (at protein level).

It is found in the secreted. This is an uncharacterized protein from Acropora millepora (Staghorn coral).